Reading from the N-terminus, the 372-residue chain is NAD(P)H-quinone oxidoreductase subunit 1 (372 aa).

Helical transmembrane passes span 27–47 (LLWL…GVLV), 97–117 (LLFT…WLII), 128–148 (VGIG…GLLM), 176–196 (LALA…IDIV), 204–224 (FLSW…ICAL), 270–290 (LLVS…ELIA), 308–328 (SLGI…AILL), and 351–371 (ISLV…FAFG).

This sequence belongs to the complex I subunit 1 family. In terms of assembly, NDH-1 is composed of at least 11 different subunits.

Its subcellular location is the cellular thylakoid membrane. The enzyme catalyses a plastoquinone + NADH + (n+1) H(+)(in) = a plastoquinol + NAD(+) + n H(+)(out). It catalyses the reaction a plastoquinone + NADPH + (n+1) H(+)(in) = a plastoquinol + NADP(+) + n H(+)(out). Functionally, NDH-1 shuttles electrons from an unknown electron donor, via FMN and iron-sulfur (Fe-S) centers, to quinones in the respiratory and/or the photosynthetic chain. The immediate electron acceptor for the enzyme in this species is believed to be plastoquinone. Couples the redox reaction to proton translocation, and thus conserves the redox energy in a proton gradient. The protein is NAD(P)H-quinone oxidoreductase subunit 1 of Prochlorococcus marinus (strain SARG / CCMP1375 / SS120).